Consider the following 168-residue polypeptide: Large ribosomal subunit protein uL10 (168 aa).

It belongs to the universal ribosomal protein uL10 family. As to quaternary structure, part of the ribosomal stalk of the 50S ribosomal subunit. The N-terminus interacts with L11 and the large rRNA to form the base of the stalk. The C-terminus forms an elongated spine to which L12 dimers bind in a sequential fashion forming a multimeric L10(L12)X complex.

Functionally, forms part of the ribosomal stalk, playing a central role in the interaction of the ribosome with GTP-bound translation factors. This Acidovorax ebreus (strain TPSY) (Diaphorobacter sp. (strain TPSY)) protein is Large ribosomal subunit protein uL10.